Here is a 565-residue protein sequence, read N- to C-terminus: Carboxylesterase 1D (565 aa).

Positions 1–18 are cleaved as a signal peptide; sequence MGLYPLIWLSLAACTAWG. The N-linked (GlcNAc...) asparagine glycan is linked to N79. A disulfide bond links C87 and C116. The active-site Acyl-ester intermediate is S221. Cysteines 273 and 284 form a disulfide. E353 functions as the Charge relay system in the catalytic mechanism. Position 382 is an N6-succinyllysine (K382). The active-site Charge relay system is the H466. N-linked (GlcNAc...) asparagine glycosylation occurs at N489. The Prevents secretion from ER signature appears at 562–565; that stretch reads HVEL.

The protein belongs to the type-B carboxylesterase/lipase family. As to quaternary structure, homotrimer. Highest expression occurs in liver with lower levels in adipose tissue, kidney, heart, intestine, lung, testis and thymus.

It localises to the endoplasmic reticulum lumen. The protein resides in the cytoplasm. The protein localises to the cytosol. Its subcellular location is the lipid droplet. It is found in the microsome. The enzyme catalyses a carboxylic ester + H2O = an alcohol + a carboxylate + H(+). It catalyses the reaction a long-chain fatty acyl ethyl ester + H2O = a long-chain fatty acid + ethanol + H(+). It carries out the reaction all-trans-retinyl hexadecanoate + H2O = all-trans-retinol + hexadecanoate + H(+). In terms of biological role, major lipase in white adipose tissue. Involved in the metabolism of xenobiotics and of natural substrates. Hydrolyzes triacylglycerols and monoacylglycerols, with a preference for monoacylglycerols. The susceptibility of the substrate increases with decreasing acyl chain length of the fatty acid moiety. Catalyzes the synthesis of fatty acid ethyl esters. Hydrolyzes retinyl esters. The polypeptide is Carboxylesterase 1D (Mus musculus (Mouse)).